The primary structure comprises 227 residues: LysM and putative peptidoglycan-binding domain-containing protein 1 (227 aa).

Pro residues predominate over residues M1 to G11. The disordered stretch occupies residues M1 to R20. 2 positions are modified to phosphoserine: S23 and S33. The region spanning L40–I84 is the LysM domain. A disordered region spans residues N95–H150. Positions D98–E107 are enriched in acidic residues. Phosphoserine is present on S99. The segment covering E108 to E127 has biased composition (basic and acidic residues). 4 positions are modified to phosphoserine: S166, S181, S194, and S212. The disordered stretch occupies residues A172–R196.

The chain is LysM and putative peptidoglycan-binding domain-containing protein 1 (LYSMD1) from Macaca fascicularis (Crab-eating macaque).